Here is a 265-residue protein sequence, read N- to C-terminus: Sulfur carrier protein FdhD (265 aa).

Catalysis depends on cysteine 107, which acts as the Cysteine persulfide intermediate.

It belongs to the FdhD family.

Its subcellular location is the cytoplasm. Required for formate dehydrogenase (FDH) activity. Acts as a sulfur carrier protein that transfers sulfur from IscS to the molybdenum cofactor prior to its insertion into FDH. This chain is Sulfur carrier protein FdhD, found in Staphylococcus aureus (strain NCTC 8325 / PS 47).